The following is a 203-amino-acid chain: Adenosylcobalamin/alpha-ribazole phosphatase (203 aa).

Histidine 8 (tele-phosphohistidine intermediate) is an active-site residue. Catalysis depends on glutamate 81, which acts as the Proton donor/acceptor.

The protein belongs to the phosphoglycerate mutase family.

It carries out the reaction adenosylcob(III)alamin 5'-phosphate + H2O = adenosylcob(III)alamin + phosphate. The catalysed reaction is alpha-ribazole 5'-phosphate + H2O = alpha-ribazole + phosphate. Its pathway is nucleoside biosynthesis; alpha-ribazole biosynthesis; alpha-ribazole from 5,6-dimethylbenzimidazole: step 2/2. In terms of biological role, catalyzes the conversion of adenosylcobalamin 5'-phosphate to adenosylcobalamin (vitamin B12); involved in the assembly of the nucleotide loop of cobalamin. Also catalyzes the hydrolysis of the phospho group from alpha-ribazole 5'-phosphate to form alpha-ribazole. The chain is Adenosylcobalamin/alpha-ribazole phosphatase (cobC) from Escherichia coli (strain K12).